A 553-amino-acid chain; its full sequence is CTP synthase (553 aa).

The tract at residues 1–266 (MKYIFVTGGV…GKAVEDLLGL (266 aa)) is amidoligase domain. Ser12 contributes to the CTP binding site. Ser12 serves as a coordination point for UTP. 13–18 (SLGKGV) serves as a coordination point for ATP. Tyr53 is an L-glutamine binding site. Asp70 serves as a coordination point for ATP. The Mg(2+) site is built by Asp70 and Glu140. CTP is bound by residues 147 to 149 (DIE), 187 to 192 (KTKPTQ), and Lys223. Residues 187–192 (KTKPTQ) and Lys223 each bind UTP. One can recognise a Glutamine amidotransferase type-1 domain in the interval 291-541 (TIAIAGKYTE…VAAALQSGPS (251 aa)). Gly353 provides a ligand contact to L-glutamine. The active-site Nucleophile; for glutamine hydrolysis is the Cys380. Residues 381–384 (LGMQ), Glu404, and Arg464 each bind L-glutamine. Active-site residues include His514 and Glu516.

Belongs to the CTP synthase family. As to quaternary structure, homotetramer.

The catalysed reaction is UTP + L-glutamine + ATP + H2O = CTP + L-glutamate + ADP + phosphate + 2 H(+). It catalyses the reaction L-glutamine + H2O = L-glutamate + NH4(+). The enzyme catalyses UTP + NH4(+) + ATP = CTP + ADP + phosphate + 2 H(+). Its pathway is pyrimidine metabolism; CTP biosynthesis via de novo pathway; CTP from UDP: step 2/2. Allosterically activated by GTP, when glutamine is the substrate; GTP has no effect on the reaction when ammonia is the substrate. The allosteric effector GTP functions by stabilizing the protein conformation that binds the tetrahedral intermediate(s) formed during glutamine hydrolysis. Inhibited by the product CTP, via allosteric rather than competitive inhibition. Its function is as follows. Catalyzes the ATP-dependent amination of UTP to CTP with either L-glutamine or ammonia as the source of nitrogen. Regulates intracellular CTP levels through interactions with the four ribonucleotide triphosphates. The chain is CTP synthase from Deinococcus geothermalis (strain DSM 11300 / CIP 105573 / AG-3a).